The sequence spans 3391 residues: Genome polyprotein (3391 aa).

The tract at residues 1 to 15 is interaction with host EXOC1; that stretch reads MNNQRKKARNTPFNM. Over 1 to 101 the chain is Cytoplasmic; the sequence is MNNQRKKARN…LNILNRRRRT (101 aa). The segment at 37-72 is hydrophobic; homodimerization of capsid protein C; sequence MLQGRGPLKLFMALVAFLRFLTIPPTAGILKRWGTI. Positions 101 to 114 are cleaved as a propeptide — ER anchor for the capsid protein C, removed in mature form by serine protease NS3; it reads TAGMIIMLIPTVMA. A helical transmembrane segment spans residues 102–122; that stretch reads AGMIIMLIPTVMAFHLTTRNG. Residues 123 to 238 lie on the Extracellular side of the membrane; it reads EPHMIVSRQE…GAWKHAQRIE (116 aa). Asparagine 183 carries an N-linked (GlcNAc...) asparagine; by host glycan. The chain crosses the membrane as a helical span at residues 239-259; sequence TWILRHPGFTIMAAILAYTIG. The Cytoplasmic portion of the chain corresponds to 260-265; it reads TTHFQR. A helical transmembrane segment spans residues 266 to 280; it reads ALIFILLTAVAPSMT. Over 281–725 the chain is Extracellular; the sequence is MRCIGISNRD…LHQVFGAIYG (445 aa). Disulfide bonds link cysteine 283–cysteine 310, cysteine 340–cysteine 401, cysteine 354–cysteine 385, and cysteine 372–cysteine 396. Residue asparagine 347 is glycosylated (N-linked (GlcNAc...) asparagine; by host). Positions 378–391 are fusion peptide; that stretch reads DRGWGNGCGLFGKG. A glycan (N-linked (GlcNAc...) asparagine; by host) is linked at asparagine 433. Intrachain disulfides connect cysteine 465–cysteine 565 and cysteine 582–cysteine 613. Residues 726-746 traverse the membrane as a helical segment; it reads AAFSGVSWIMKILIGVIITWI. Residues 747 to 752 are Cytoplasmic-facing; it reads GMNSRS. A helical transmembrane segment spans residues 753–773; that stretch reads TSLSVSLVLVGVVTLYLGVMV. At 774-1195 the chain is on the extracellular side; that stretch reads QADSGCVVSW…MVGATMTDDI (422 aa). 6 disulfide bridges follow: cysteine 779/cysteine 790, cysteine 830/cysteine 918, cysteine 954/cysteine 998, cysteine 1055/cysteine 1104, cysteine 1066/cysteine 1088, and cysteine 1087/cysteine 1091. 2 N-linked (GlcNAc...) asparagine; by host glycosylation sites follow: asparagine 905 and asparagine 982. Residues 1196 to 1220 form a helical membrane-spanning segment; it reads GMGVTYLALLAAFKVRPTFAAGLLL. Residues 1221–1226 lie on the Cytoplasmic side of the membrane; the sequence is RKLTSK. Residues 1227 to 1245 form a helical membrane-spanning segment; it reads ELMMTTIGIVLLSQSTIPE. Residues 1246-1269 lie on the Lumenal side of the membrane; that stretch reads TILELTDALALGMMVLKMVRKMEK. A helical transmembrane segment spans residues 1270–1290; that stretch reads YQLAVTIMAILCVPNAVILQN. Position 1291 (alanine 1291) is a topological domain, cytoplasmic. The chain crosses the membrane as a helical span at residues 1292–1310; that stretch reads WKVSCTILAVVSVSPLFLT. At 1311–1317 the chain is on the lumenal side; it reads SSQQKAD. Residues 1318–1338 traverse the membrane as a helical segment; sequence WIPLALTIKGLNPTAIFLTTL. The Cytoplasmic portion of the chain corresponds to 1339–1346; the sequence is SRTNKKRS. The chain crosses the membrane as a helical span at residues 1347 to 1367; sequence WPLNEAIMAVGMVSILASSLL. Topologically, residues 1368 to 1370 are lumenal; that stretch reads KND. A helical membrane pass occupies residues 1371-1391; it reads IPMTGPLVAGGLLTVCYVLTG. At 1392-1447 the chain is on the cytoplasmic side; sequence RSADLELERAADVKWEDQAEISGSSPILSITISEDGSMSIKNEEEEQTLTILIRTG. The interval 1398-1437 is interacts with and activates NS3 protease; that stretch reads LERAADVKWEDQAEISGSSPILSITISEDGSMSIKNEEEE. An intramembrane region (helical) is located at residues 1448-1468; the sequence is LLVISGLFPVSIPITAAAWYL. Over 1469-2147 the chain is Cytoplasmic; that stretch reads WEVKKQRAGV…LSELPETLET (679 aa). The region spanning 1476–1653 is the Peptidase S7 domain; it reads AGVLWDVPSP…EKSIEDNPEI (178 aa). Active-site charge relay system; for serine protease NS3 activity residues include histidine 1526, aspartate 1550, and serine 1610. The Helicase ATP-binding domain occupies 1655 to 1811; it reads DDIFRKRKLT…QSNAPIMDEE (157 aa). The interval 1659-1662 is important for RNA-binding; that stretch reads RKRK. 1668 to 1675 provides a ligand contact to ATP; it reads LHPGAGKT. A DEAH box motif is present at residues 1759–1762; sequence DEAH. In terms of domain architecture, Helicase C-terminal spans 1821–1988; it reads SGHEWVTDFK…IIPSMFEPER (168 aa). N6-acetyllysine; by host is present on lysine 1863. The chain crosses the membrane as a helical span at residues 2148–2168; it reads LLLLTLLATVTGGIFLFLMSG. Topologically, residues 2169–2170 are lumenal; sequence RG. The segment at residues 2171–2191 is an intramembrane region (helical); sequence IGKMTLGMCCIITASILLWYA. Glutamine 2192 is a topological domain (lumenal). Residues 2193 to 2213 traverse the membrane as a helical segment; it reads IQPHWIAASIILEFFLIVLLI. At 2214–2228 the chain is on the cytoplasmic side; sequence PEPEKQRTPQDNQLT. The helical transmembrane segment at 2229 to 2249 threads the bilayer; it reads YVVIAILTVVAATMANEMGFL. The Lumenal segment spans residues 2250 to 2274; that stretch reads EKTKKDLGLGSITTQQPESNILDID. The segment at residues 2275 to 2295 is an intramembrane region (helical); that stretch reads LRPASAWTLYAVATTFVTPML. The Lumenal portion of the chain corresponds to 2296-2316; sequence RHSIENSSVNVSLTAIANQAT. Residues asparagine 2301 and asparagine 2305 are each glycosylated (N-linked (GlcNAc...) asparagine; by host). An intramembrane region (helical) is located at residues 2317-2337; it reads VLMGLGKGWPLSKMDIGVPLL. Topologically, residues 2338–2347 are lumenal; it reads AIGCYSQVNP. The helical transmembrane segment at 2348 to 2368 threads the bilayer; the sequence is ITLTAALFLLVAHYAIIGPGL. Topologically, residues 2369-2413 are cytoplasmic; that stretch reads QAKATREAQKRAAAGIMKNPTVDGITVIDLDPIPYDPKFEKQLGQ. The chain crosses the membrane as a helical span at residues 2414–2434; the sequence is VMLLVLCVTQVLMMRTTWALC. The Lumenal portion of the chain corresponds to 2435–2459; the sequence is EALTLATGPISTLWEGNPGRFWNTT. Asparagine 2457 is a glycosylation site (N-linked (GlcNAc...) asparagine; by host). Residues 2460 to 2480 form a helical membrane-spanning segment; that stretch reads IAVSMANIFRGSYLAGAGLLF. The Cytoplasmic portion of the chain corresponds to 2481–3391; it reads SIMKNTTNTR…KEEEEAGVLW (911 aa). In terms of domain architecture, mRNA cap 0-1 NS5-type MT spans 2493-2755; that stretch reads TGNIGETLGE…DVDLGSGTRN (263 aa). Serine 2547 contacts S-adenosyl-L-methionine. The residue at position 2547 (serine 2547) is a Phosphoserine. The active-site For 2'-O-MTase activity is lysine 2552. An SUMO-interacting motif motif is present at residues 2568 to 2571; sequence VVDL. Glycine 2577, tryptophan 2578, threonine 2595, lysine 2596, aspartate 2622, and valine 2623 together coordinate S-adenosyl-L-methionine. Aspartate 2637 acts as the For 2'-O-MTase activity in catalysis. S-adenosyl-L-methionine is bound at residue isoleucine 2638. Active-site for 2'-O-MTase activity residues include lysine 2672 and glutamate 2708. Residue tyrosine 2710 coordinates S-adenosyl-L-methionine. Zn(2+) contacts are provided by glutamate 2929, histidine 2933, cysteine 2938, and cysteine 2941. The region spanning 3019 to 3168 is the RdRp catalytic domain; the sequence is GAMYADDTAG…KPLDDRFASA (150 aa). The Zn(2+) site is built by histidine 3203, cysteine 3219, and cysteine 3338.

It in the N-terminal section; belongs to the class I-like SAM-binding methyltransferase superfamily. mRNA cap 0-1 NS5-type methyltransferase family. In terms of assembly, homodimer. Interacts (via N-terminus) with host EXOC1 (via C-terminus); this interaction results in EXOC1 degradation through the proteasome degradation pathway. As to quaternary structure, forms heterodimers with envelope protein E in the endoplasmic reticulum and Golgi. Homodimer; in the endoplasmic reticulum and Golgi. Interacts with protein prM. Interacts with non-structural protein 1. In terms of assembly, homodimer; Homohexamer when secreted. Interacts with envelope protein E. Interacts with host PRKAA1. As to quaternary structure, interacts (via N-terminus) with serine protease NS3. Forms a heterodimer with serine protease NS3. May form homooligomers. In terms of assembly, forms a heterodimer with NS2B. Interacts with NS4B. Interacts with unphosphorylated RNA-directed RNA polymerase NS5; this interaction stimulates RNA-directed RNA polymerase NS5 guanylyltransferase activity. Interacts with host SHFL. As to quaternary structure, interacts with host MAVS; this interaction inhibits the synthesis of IFN-beta. Interacts with host MAVS; this interaction inhibits the synthesis of IFN-beta. Interacts with host SHFL. Interacts with host AUP1; the interaction occurs in the presence of Dengue virus NS4B and induces lipophagy which facilitates production of virus progeny particles. May interact with host SRPRA and SEC61G. Interacts with serine protease NS. In terms of assembly, homodimer. Interacts with host STAT2; this interaction inhibits the phosphorylation of the latter, and, when all viral proteins are present (polyprotein), targets STAT2 for degradation. Interacts with serine protease NS3. Interacts with host PAF1 complex; the interaction may prevent the recruitment of the PAF1 complex to interferon-responsive genes, and thus reduces the immune response. Specific enzymatic cleavages in vivo yield mature proteins. Cleavages in the lumen of endoplasmic reticulum are performed by host signal peptidase, whereas cleavages in the cytoplasmic side are performed by serine protease NS3. Signal cleavage at the 2K-4B site requires a prior NS3 protease-mediated cleavage at the 4A-2K site. Post-translationally, cleaved in post-Golgi vesicles by a host furin, releasing the mature small envelope protein M, and peptide pr. This cleavage is incomplete as up to 30% of viral particles still carry uncleaved prM. In terms of processing, N-glycosylated. N-glycosylated. The excreted form is glycosylated and this is required for efficient secretion of the protein from infected cells. Post-translationally, acetylated by host KAT5. Acetylation modulates NS3 RNA-binding and unwinding activities and plays an important positive role for viral replication. In terms of processing, sumoylation of RNA-directed RNA polymerase NS5 increases NS5 protein stability allowing proper viral RNA replication. Phosphorylated on serines residues. This phosphorylation may trigger NS5 nuclear localization.

It localises to the virion. It is found in the host nucleus. Its subcellular location is the host cytoplasm. The protein localises to the host perinuclear region. The protein resides in the secreted. It localises to the virion membrane. It is found in the host endoplasmic reticulum membrane. Its subcellular location is the host mitochondrion. It carries out the reaction Selective hydrolysis of -Xaa-Xaa-|-Yaa- bonds in which each of the Xaa can be either Arg or Lys and Yaa can be either Ser or Ala.. The enzyme catalyses RNA(n) + a ribonucleoside 5'-triphosphate = RNA(n+1) + diphosphate. The catalysed reaction is a ribonucleoside 5'-triphosphate + H2O = a ribonucleoside 5'-diphosphate + phosphate + H(+). It catalyses the reaction ATP + H2O = ADP + phosphate + H(+). It carries out the reaction a 5'-end (5'-triphosphoguanosine)-ribonucleoside in mRNA + S-adenosyl-L-methionine = a 5'-end (N(7)-methyl 5'-triphosphoguanosine)-ribonucleoside in mRNA + S-adenosyl-L-homocysteine. The enzyme catalyses a 5'-end (N(7)-methyl 5'-triphosphoguanosine)-ribonucleoside in mRNA + S-adenosyl-L-methionine = a 5'-end (N(7)-methyl 5'-triphosphoguanosine)-(2'-O-methyl-ribonucleoside) in mRNA + S-adenosyl-L-homocysteine + H(+). Its function is as follows. Plays a role in virus budding by binding to the cell membrane and gathering the viral RNA into a nucleocapsid that forms the core of a mature virus particle. During virus entry, may induce genome penetration into the host cytoplasm after hemifusion induced by the surface proteins. Can migrate to the cell nucleus where it modulates host functions. Overcomes the anti-viral effects of host EXOC1 by sequestering and degrading the latter through the proteasome degradation pathway. In terms of biological role, inhibits RNA silencing by interfering with host Dicer. Functionally, prevents premature fusion activity of envelope proteins in trans-Golgi by binding to envelope protein E at pH6.0. After virion release in extracellular space, gets dissociated from E dimers. Acts as a chaperone for envelope protein E during intracellular virion assembly by masking and inactivating envelope protein E fusion peptide. prM is the only viral peptide matured by host furin in the trans-Golgi network probably to avoid catastrophic activation of the viral fusion activity in acidic Golgi compartment prior to virion release. prM-E cleavage is inefficient, and many virions are only partially matured. These uncleaved prM would play a role in immune evasion. Its function is as follows. May play a role in virus budding. Exerts cytotoxic effects by activating a mitochondrial apoptotic pathway through M ectodomain. May display a viroporin activity. In terms of biological role, binds to host cell surface receptor and mediates fusion between viral and cellular membranes. Envelope protein is synthesized in the endoplasmic reticulum in the form of heterodimer with protein prM. They play a role in virion budding in the ER, and the newly formed immature particle is covered with 60 spikes composed of heterodimer between precursor prM and envelope protein E. The virion is transported to the Golgi apparatus where the low pH causes dissociation of PrM-E heterodimers and formation of E homodimers. prM-E cleavage is inefficient, and many virions are only partially matured. These uncleaved prM would play a role in immune evasion. Functionally, involved in immune evasion, pathogenesis and viral replication. Once cleaved off the polyprotein, is targeted to three destinations: the viral replication cycle, the plasma membrane and the extracellular compartment. Essential for viral replication. Required for formation of the replication complex and recruitment of other non-structural proteins to the ER-derived membrane structures. Excreted as a hexameric lipoparticle that plays a role against host immune response. Antagonizing the complement function. Binds to the host macrophages and dendritic cells. Inhibits signal transduction originating from Toll-like receptor 3 (TLR3). Mediates complement activation, which may contribute to the pathogenesis of the vascular leakage that occurs in severe dengue disease. Activates autophagy through the AMPK/ERK/mTOR signaling pathway. Mechanistically, acts as the assembly platform for STK11-AMPK interactions and promotes STK11-AMPK interactions. In turn, promotes phosphorylation of the AMPK kinase structural domain and activates AMPK, thereby positively regulating the AMPK/ERK/mTOR signaling pathway and inducing autophagy. Disrupts the host endothelial glycocalyx layer of host pulmonary microvascular endothelial cells, inducing degradation of sialic acid and shedding of heparan sulfate proteoglycans. NS1 induces expression of sialidases, heparanase, and activates cathepsin L, which activates heparanase via enzymatic cleavage. These effects are probably linked to the endothelial hyperpermeability observed in severe dengue disease. Its function is as follows. Component of the viral RNA replication complex that functions in virion assembly and antagonizes the host immune response. In terms of biological role, required cofactor for the serine protease function of NS3. May have membrane-destabilizing activity and form viroporins. Functionally, displays three enzymatic activities: serine protease, NTPase and RNA helicase. NS3 serine protease, in association with NS2B, performs its autocleavage and cleaves the polyprotein at dibasic sites in the cytoplasm: C-prM, NS2A-NS2B, NS2B-NS3, NS3-NS4A, NS4A-2K and NS4B-NS5. NS3 RNA helicase binds RNA and unwinds dsRNA in the 3' to 5' direction. Regulates the ATPase activity of the NS3 helicase activity. NS4A allows NS3 helicase to conserve energy during unwinding. Plays a role in the inhibition of the host innate immune response. Interacts with host MAVS and thereby prevents the interaction between RIGI and MAVS. In turn, IFN-beta production is impaired. Interacts with host AUP1 which mediates induction of lipophagy in host cells and facilitates production of virus progeny particles. Its function is as follows. Functions as a signal peptide for NS4B and is required for the interferon antagonism activity of the latter. In terms of biological role, induces the formation of ER-derived membrane vesicles where the viral replication takes place. Inhibits interferon (IFN)-induced host STAT1 phosphorylation and nuclear translocation, thereby preventing the establishment of cellular antiviral state by blocking the IFN-alpha/beta pathway. Functionally, replicates the viral (+) and (-) RNA genome, and performs the capping of genomes in the cytoplasm. NS5 methylates viral RNA cap at guanine N-7 and ribose 2'-O positions. Besides its role in RNA genome replication, also prevents the establishment of cellular antiviral state by blocking the interferon-alpha/beta (IFN-alpha/beta) signaling pathway. Inhibits host TYK2 and STAT2 phosphorylation, thereby preventing activation of JAK-STAT signaling pathway. May reduce immune responses by preventing the recruitment of the host PAF1 complex to interferon-responsive genes. The sequence is that of Genome polyprotein from Aedimorphus (Red guenon).